The primary structure comprises 328 residues: P2Y purinoceptor 6 (328 aa).

Topologically, residues M1–L27 are extracellular. N5 carries an N-linked (GlcNAc...) asparagine glycan. The chain crosses the membrane as a helical span at residues L28–I48. At T49–A62 the chain is on the cytoplasmic side. A helical membrane pass occupies residues V63–I83. Topologically, residues Y84–L101 are extracellular. Residues C99 and C177 are joined by a disulfide bond. Residues V102–F122 traverse the membrane as a helical segment. The Cytoplasmic portion of the chain corresponds to Q123–A144. The helical transmembrane segment at W145–F165 threads the bilayer. At A166–M194 the chain is on the extracellular side. Residues A195–L215 form a helical membrane-spanning segment. The Cytoplasmic segment spans residues A216–K236. The helical transmembrane segment at A237–I257 threads the bilayer. At T258–A280 the chain is on the extracellular side. A helical membrane pass occupies residues A281–F303. Topologically, residues T304–R328 are cytoplasmic.

The protein belongs to the G-protein coupled receptor 1 family.

It is found in the cell membrane. Receptor for extracellular UDP &gt; UTP &gt; ATP. The activity of this receptor is mediated by G proteins which activate a phosphatidylinositol-calcium second messenger system. The chain is P2Y purinoceptor 6 (P2RY6) from Homo sapiens (Human).